A 747-amino-acid chain; its full sequence is Beta-glucosidase BoGH3A (747 aa).

Residues 1–26 (MIIGIMKTFLLTICFLSVQTGMVAIA) form the signal peptide. Asp-273 is an active-site residue.

This sequence belongs to the glycosyl hydrolase 3 family.

It is found in the periplasm. The catalysed reaction is Hydrolysis of terminal, non-reducing beta-D-glucosyl residues with release of beta-D-glucose.. Its pathway is glucan metabolism; xyloglucan degradation. Functionally, catalyzes the hydrolysis of terminal, non-reducing beta-D-glucosyl residues with release of beta-D-glucose in xyloglucan degradation, leading to remove the backbone 'G' units. The chain is Beta-glucosidase BoGH3A from Bacteroides ovatus (strain ATCC 8483 / DSM 1896 / JCM 5824 / BCRC 10623 / CCUG 4943 / NCTC 11153).